A 931-amino-acid polypeptide reads, in one-letter code: MRVKDTLNLGKTKFPMRGNLPKREAEWEKNWEDQKFYERRLKLNEGHERFDLHDGPPFANGNIHMGHALNKITKDIIVRSKNMEGYYAPYVPGWDTHGLPIEQQLTKQGVDRKTMDRAAYRELCRKFAMEQVEKQRTDFKRLGVMGDWDHPYITLLPEFEAAEIRVFGKMYENGYIYQGKKPVYWSWSSESTLAEAEVEYHDVESPSIYISFPVKDGKGKLSEENTYFLIWTTTPWTIPSNQGIAVNPKFDYSVVEVGDRRYVVGTDRLSAVAEILGWDSYKTVQHLKGTDMEYMVAKHPYIEGRDSLLMEAVYVTDDDGTGLVHTASGFGEDDYNTAMRYGFDVLSPMDNKGCFTEEIPDPDLVGKFYTDTNEIVKDKLSAAGNLLHYSTFVHSAAHDWRTKKPVVYRATTQWFASISKFRDQILDQIEKTTFYPAWGKTRLYNMIKDRGDWVISRQRAWGVPLPIFYAEDGTAIVTHETIEHVADLFAKEGSNAWFTHPVEELLPEGFTSEHSPNGKFTKETDILDVWFDSGSSWSGVQALGRAVHYPTSMYLEGSDQYRGWFNSSLITSVATNGVAPYKSVLSQGFTLDGQGRKMSKSLGNTIAPNDVIKQMGAEIIRLWVASVDASGDVGVSMDILRQVSEGYRKIRNTFRYMLANTADFDPEKDRVAYKDLCKIDQYLEVKLNDLVAESIVNYDKYDFADVYKLVFKFITNDLSAFYLDFAKDVLYIEGKDSHARRSMQTVIYDAAVKLAKILAPILPHTMGEVWGYLKEKEEDVYLSNFPEIEDYADADDLKESWGEFMKLRDDVLKALEEARDQKLIGKSFEASVTVYPGEAAKAALDKLAGEDFREILIVSNLVMGQGEVPAEAKQFDQASVLVRRAEGEVCPRCRMYRTDLGADSRLPQLCGRCASIVAGDHPEILEEGLED.

The 'HIGH' region motif lies at 57-67 (PFANGNIHMGH). Glutamate 556 is an L-isoleucyl-5'-AMP binding site. Residues 597–601 (KMSKS) carry the 'KMSKS' region motif. ATP is bound at residue lysine 600. Zn(2+) contacts are provided by cysteine 890, cysteine 893, cysteine 910, and cysteine 913.

The protein belongs to the class-I aminoacyl-tRNA synthetase family. IleS type 1 subfamily. In terms of assembly, monomer. It depends on Zn(2+) as a cofactor.

The protein localises to the cytoplasm. The enzyme catalyses tRNA(Ile) + L-isoleucine + ATP = L-isoleucyl-tRNA(Ile) + AMP + diphosphate. Its function is as follows. Catalyzes the attachment of isoleucine to tRNA(Ile). As IleRS can inadvertently accommodate and process structurally similar amino acids such as valine, to avoid such errors it has two additional distinct tRNA(Ile)-dependent editing activities. One activity is designated as 'pretransfer' editing and involves the hydrolysis of activated Val-AMP. The other activity is designated 'posttransfer' editing and involves deacylation of mischarged Val-tRNA(Ile). In Lactobacillus delbrueckii subsp. bulgaricus (strain ATCC 11842 / DSM 20081 / BCRC 10696 / JCM 1002 / NBRC 13953 / NCIMB 11778 / NCTC 12712 / WDCM 00102 / Lb 14), this protein is Isoleucine--tRNA ligase.